The primary structure comprises 35 residues: Thionin NsW2 (35 aa).

3 disulfides stabilise this stretch: C4–C32, C12–C30, and C16–C26.

Post-translationally, contains 4 disulfide bonds.

The protein resides in the secreted. Its function is as follows. Antimicrobial peptide disrupting membranes. Has antibacterial against Gram-positive bacteria S.aureus (MIC=6.5 uM) and B.subtilis (MIC=3.25 uM) but not against Gram-negative bacterium E.coli. Has antifungal activity against C.albicans (MIC=3.25 uM). The sequence is that of Thionin NsW2 from Nigella sativa (Black cumin).